A 284-amino-acid chain; its full sequence is MDAIKKKMQMLKLDKENALDRAEQAESDKKASEDRSKQLEDDLVALQKKLKGTEDELDKYSEALKDAQEKLELAEKKATDAEGDVASLNRRIQLVEEELDRAQERLATALTKLEEAEKAADESERGMKVIENRAMKDEEKMELQEIQLKEAKHIAEEADRKYEEVARKLVIIEGDLERTEERAELSESKCSELEEELKTVTNNLKSLEAQAEKYSQKEDKYEEEIKVLTDKLKEAETRAEFAERSVAKLEKTIDDLEDELYAQKLKYKAISEELDHALNDMTSI.

An N-acetylmethionine modification is found at methionine 1. The disordered stretch occupies residues 1-40 (MDAIKKKMQMLKLDKENALDRAEQAESDKKASEDRSKQLE). A coiled-coil region spans residues 1-284 (MDAIKKKMQM…DHALNDMTSI (284 aa)). Over residues 12 to 40 (KLDKENALDRAEQAESDKKASEDRSKQLE) the composition is skewed to basic and acidic residues.

Homodimer. Heterodimer of an alpha (TPM1, TPM3 or TPM4) and a beta (TPM2) chain.

It is found in the cytoplasm. The protein localises to the cytoskeleton. Binds to actin filaments in muscle and non-muscle cells. Plays a central role, in association with the troponin complex, in the calcium dependent regulation of vertebrate striated muscle contraction. Smooth muscle contraction is regulated by interaction with caldesmon. In non-muscle cells is implicated in stabilizing cytoskeleton actin filaments. The polypeptide is Tropomyosin alpha-1 chain (Chelon auratus (Golden grey mullet)).